A 123-amino-acid chain; its full sequence is uncharacterized protein (123 aa).

The next 4 helical transmembrane spans lie at 9-31 (LLLRFTLEIAALISLGVYAWISF), 38-56 (VLTLVLPIAVMIVWSVFAV), 67-91 (VIAVNGVTRLVIELLIFAMAVAALY), and 98-114 (VSIVFLCLIILHYIISA).

The protein to E.coli YhgE.

It localises to the cell membrane. This is an uncharacterized protein from Bacillus subtilis (strain 168).